A 515-amino-acid polypeptide reads, in one-letter code: Protein pid-4 (515 aa).

A disordered region spans residues 496-515 (DRSPQKFKFPASGSYMKPAN).

In terms of assembly, may interact with pid-2, app-1 and prmt-5.

The protein resides in the cytoplasm. Its subcellular location is the perinuclear region. It localises to the P-body. Together with pid-5, it is involved in gene silencing mediated by a class of 21 nucleotide PIWI-interacting RNAs (piRNAs) that possess a uracil residue at the 5'-end (also called 21U-RNAs) and guide the Piwi protein prg-1 to its DNA targets for silencing. Together with pid-5, it is required for the biogenesis of secondary and tertiary 22G-siRNAs. Specifically, promotes the production of 22G-siRNAs from the 5' end of target mRNAs. Together with pid-5, plays a role in small RNA-directed transgenerational epigenetic inheritance (also called RNAe) over several generations and germline immortality. Together with pid-5, plays a role in the formation of liquid-like condensates in the cytoplasm called Z granules. This chain is Protein pid-4, found in Caenorhabditis elegans.